Reading from the N-terminus, the 249-residue chain is Cytoplasmic envelopment protein 1 (249 aa).

The protein belongs to the herpesviridae cytoplasmic envelopment protein 1 family.

Its subcellular location is the virion. It is found in the virion tegument. The protein localises to the host cytoplasm. It localises to the host Golgi apparatus. Functionally, plays a critical role in cytoplasmic virus egress. Participates in the final step of tegumentation and envelope acquisition within the host cytoplasm. The polypeptide is Cytoplasmic envelopment protein 1 (U75) (Human herpesvirus 6A (strain Uganda-1102) (HHV-6 variant A)).